We begin with the raw amino-acid sequence, 722 residues long: Putative tyrosine-protein kinase in cps region (722 aa).

The next 2 membrane-spanning stretches (helical) occupy residues isoleucine 31 to isoleucine 53 and isoleucine 427 to leucine 449.

Belongs to the etk/wzc family. In terms of processing, autophosphorylated on tyrosine residue(s).

The protein resides in the cell inner membrane. It carries out the reaction L-tyrosyl-[protein] + ATP = O-phospho-L-tyrosyl-[protein] + ADP + H(+). It functions in the pathway glycan metabolism; exopolysaccharide biosynthesis. This chain is Putative tyrosine-protein kinase in cps region, found in Klebsiella pneumoniae.